A 204-amino-acid polypeptide reads, in one-letter code: Ras-related protein Rab-1D (204 aa).

GTP is bound by residues 17-25, 35-42, 65-69, 123-126, and 153-155; these read GDSGVGKSC, WTDTHIST, DTAGQ, NKTD, and SAK. An Effector region motif is present at residues 39–47; that stretch reads HISTIGVDF. Residues 182-191 show a composition bias toward basic and acidic residues; the sequence is PKPDEVDIKS. The tract at residues 182–204 is disordered; sequence PKPDEVDIKSKNKTKSGGKKSFC. Residues 192-204 are compositionally biased toward basic residues; sequence KNKTKSGGKKSFC. C204 is lipidated: S-geranylgeranyl cysteine.

This sequence belongs to the small GTPase superfamily. Rab family.

The protein resides in the cell membrane. This chain is Ras-related protein Rab-1D (rab1D), found in Dictyostelium discoideum (Social amoeba).